The sequence spans 350 residues: FAD:protein FMN transferase (350 aa).

Positions 1–19 are cleaved as a signal peptide; sequence MKMTFCRAVCLAAAFLLMG. The N-palmitoyl cysteine moiety is linked to residue Cys-20. The S-diacylglycerol cysteine moiety is linked to residue Cys-20. FAD-binding positions include Met-41, Tyr-78, 119–121, and Asp-181; that span reads AMD. Residue Thr-184 coordinates Mg(2+). The FAD site is built by Glu-187 and Ile-272. Residues Asp-298, Asp-301, and Thr-302 each coordinate Mg(2+).

This sequence belongs to the ApbE family. In terms of assembly, homodimer. Requires Mg(2+) as cofactor.

Its subcellular location is the cell inner membrane. The catalysed reaction is L-threonyl-[protein] + FAD = FMN-L-threonyl-[protein] + AMP + H(+). Flavin transferase that catalyzes the transfer of the FMN moiety of FAD and its covalent binding to the hydroxyl group of a threonine residue in a target flavoprotein such as NqrB and NqrC, two subunits of the NQR complex. The sequence is that of FAD:protein FMN transferase from Salmonella typhimurium (strain LT2 / SGSC1412 / ATCC 700720).